A 27-amino-acid polypeptide reads, in one-letter code: Omega-conotoxin RVIA (27 aa).

3 cysteine pairs are disulfide-bonded: cysteine 1-cysteine 16, cysteine 8-cysteine 19, and cysteine 15-cysteine 26. 4-hydroxyproline is present on residues proline 4 and proline 7.

This sequence belongs to the conotoxin O1 superfamily. Expressed by the venom duct.

The protein localises to the secreted. In terms of biological role, omega-conotoxins act at presynaptic membranes, they bind and block voltage-gated calcium channels (Cav). In Conus radiatus (Rayed cone), this protein is Omega-conotoxin RVIA.